Reading from the N-terminus, the 364-residue chain is 3-dehydroquinate synthase (364 aa).

NAD(+) contacts are provided by residues 105–109 (GVVGD), 129–130 (TT), K142, and K151. Zn(2+) is bound by residues E184, H247, and H264.

This sequence belongs to the sugar phosphate cyclases superfamily. Dehydroquinate synthase family. The cofactor is Co(2+). Requires Zn(2+) as cofactor. NAD(+) is required as a cofactor.

It is found in the cytoplasm. It catalyses the reaction 7-phospho-2-dehydro-3-deoxy-D-arabino-heptonate = 3-dehydroquinate + phosphate. It functions in the pathway metabolic intermediate biosynthesis; chorismate biosynthesis; chorismate from D-erythrose 4-phosphate and phosphoenolpyruvate: step 2/7. Functionally, catalyzes the conversion of 3-deoxy-D-arabino-heptulosonate 7-phosphate (DAHP) to dehydroquinate (DHQ). The chain is 3-dehydroquinate synthase from Acidithiobacillus ferrooxidans (strain ATCC 23270 / DSM 14882 / CIP 104768 / NCIMB 8455) (Ferrobacillus ferrooxidans (strain ATCC 23270)).